The chain runs to 281 residues: Pantothenate synthetase (281 aa).

Residue 30–37 coordinates ATP; it reads MGALHRGH. The active-site Proton donor is His37. A (R)-pantoate-binding site is contributed by Gln61. Gln61 is a binding site for beta-alanine. An ATP-binding site is contributed by 147–150; the sequence is GEKD. Gln153 provides a ligand contact to (R)-pantoate. Residues Ile176 and 184 to 187 each bind ATP; that span reads LSSR.

This sequence belongs to the pantothenate synthetase family. Homodimer.

It localises to the cytoplasm. The enzyme catalyses (R)-pantoate + beta-alanine + ATP = (R)-pantothenate + AMP + diphosphate + H(+). The protein operates within cofactor biosynthesis; (R)-pantothenate biosynthesis; (R)-pantothenate from (R)-pantoate and beta-alanine: step 1/1. Functionally, catalyzes the condensation of pantoate with beta-alanine in an ATP-dependent reaction via a pantoyl-adenylate intermediate. The chain is Pantothenate synthetase from Porphyromonas gingivalis (strain ATCC BAA-308 / W83).